Here is a 56-residue protein sequence, read N- to C-terminus: Small ribosomal subunit protein bS21 (56 aa).

This sequence belongs to the bacterial ribosomal protein bS21 family.

The chain is Small ribosomal subunit protein bS21 from Synechococcus sp. (strain RCC307).